The primary structure comprises 89 residues: Islet amyloid polypeptide (89 aa).

Positions 1 to 22 (MCLLKLPVVLIVLLVALHHLKA) are cleaved as a signal peptide. The propeptide occupies 23 to 31 (TPIESNQVE). A disulfide bridge links cysteine 35 with cysteine 40. Tyrosine 70 is subject to Tyrosine amide. The propeptide occupies 74–89 (STVDILNREPLNYLPF).

This sequence belongs to the calcitonin family. In terms of assembly, can form homodimers. Interacts with IDE and INS. Interaction with INS inhibits homodimerization and fibril formation.

It localises to the secreted. In terms of biological role, amylin/IAPP is a glucoregulatory peptide hormone that plays an important role in the regulation of energy homeostasis. Selectively inhibits insulin-stimulated glucose utilization and glycogen deposition in muscle, while not affecting adipocyte glucose metabolism. IAPP function is mediated by the CALCR-RAMPs (AMYRs) receptor complexes. Amylin can also bind CALCR receptor in the absence of RAMPs, although it is more selective for AMYRs. This is Islet amyloid polypeptide (IAPP) from Felis catus (Cat).